The sequence spans 161 residues: Dihydrofolate reductase (161 aa).

The DHFR domain occupies 2-157 (TLSIIVAHDK…IPHTFLHLVR (156 aa)). Substrate is bound at residue 6–8 (IVA). NADP(+) contacts are provided by residues 7–8 (VA) and 15–20 (IGYQNQ). Asp-28 lines the substrate pocket. 44 to 47 (GRKT) lines the NADP(+) pocket. Arg-58 contacts substrate. NADP(+)-binding positions include 63-66 (LTNQ) and 93-98 (FGGQTL). Thr-112 is a binding site for substrate.

Belongs to the dihydrofolate reductase family.

It carries out the reaction (6S)-5,6,7,8-tetrahydrofolate + NADP(+) = 7,8-dihydrofolate + NADPH + H(+). Its pathway is cofactor biosynthesis; tetrahydrofolate biosynthesis; 5,6,7,8-tetrahydrofolate from 7,8-dihydrofolate: step 1/1. In terms of biological role, key enzyme in folate metabolism. Catalyzes an essential reaction for de novo glycine and purine synthesis, and for DNA precursor synthesis. This chain is Dihydrofolate reductase (folA), found in Staphylococcus epidermidis.